The chain runs to 445 residues: Putative serpin-Z5 (445 aa).

The segment at 356 to 380 (GTEAAASAINMVCGMSMTPEPRPVP) is RCL.

It belongs to the serpin family.

Functionally, probable serine protease inhibitor. The polypeptide is Putative serpin-Z5 (Oryza sativa subsp. japonica (Rice)).